Reading from the N-terminus, the 228-residue chain is 2-C-methyl-D-erythritol 4-phosphate cytidylyltransferase (228 aa).

The protein belongs to the IspD/TarI cytidylyltransferase family. IspD subfamily.

It catalyses the reaction 2-C-methyl-D-erythritol 4-phosphate + CTP + H(+) = 4-CDP-2-C-methyl-D-erythritol + diphosphate. It participates in isoprenoid biosynthesis; isopentenyl diphosphate biosynthesis via DXP pathway; isopentenyl diphosphate from 1-deoxy-D-xylulose 5-phosphate: step 2/6. Catalyzes the formation of 4-diphosphocytidyl-2-C-methyl-D-erythritol from CTP and 2-C-methyl-D-erythritol 4-phosphate (MEP). This Crocosphaera subtropica (strain ATCC 51142 / BH68) (Cyanothece sp. (strain ATCC 51142)) protein is 2-C-methyl-D-erythritol 4-phosphate cytidylyltransferase.